The following is a 146-amino-acid chain: 3-dehydroquinate dehydratase (146 aa).

Tyr-24 serves as the catalytic Proton acceptor. Residues Asn-75, His-81, and Asp-88 each contribute to the substrate site. Residue His-101 is the Proton donor of the active site. Substrate contacts are provided by residues 102 to 103 (LS) and Arg-112.

It belongs to the type-II 3-dehydroquinase family. In terms of assembly, homododecamer.

The enzyme catalyses 3-dehydroquinate = 3-dehydroshikimate + H2O. It participates in metabolic intermediate biosynthesis; chorismate biosynthesis; chorismate from D-erythrose 4-phosphate and phosphoenolpyruvate: step 3/7. In terms of biological role, catalyzes a trans-dehydration via an enolate intermediate. This is 3-dehydroquinate dehydratase from Caulobacter vibrioides (strain ATCC 19089 / CIP 103742 / CB 15) (Caulobacter crescentus).